A 191-amino-acid polypeptide reads, in one-letter code: MFLIVGLGNPGNEYENTRHNIGFKVIDNIAKEYNIEINRQKFKGMYGEGFINGKKVMLLKPTTYMNLSGESVREVVDFYNLNNDEILVIYDDISLEVGKLRIREKGSAGGHNGIKSIIAHLNSEIFSRIKVGVGQPNGDLVKHVLGKFTKEETAILSESIEASTKAAAEIIKNDVKTAMNQFNGFKASTTV.

TRNA is bound at residue Tyr-14. The active-site Proton acceptor is the His-19. Residues Tyr-64, Asn-66, and Asn-112 each coordinate tRNA.

This sequence belongs to the PTH family. As to quaternary structure, monomer.

Its subcellular location is the cytoplasm. The enzyme catalyses an N-acyl-L-alpha-aminoacyl-tRNA + H2O = an N-acyl-L-amino acid + a tRNA + H(+). Hydrolyzes ribosome-free peptidyl-tRNAs (with 1 or more amino acids incorporated), which drop off the ribosome during protein synthesis, or as a result of ribosome stalling. Its function is as follows. Catalyzes the release of premature peptidyl moieties from peptidyl-tRNA molecules trapped in stalled 50S ribosomal subunits, and thus maintains levels of free tRNAs and 50S ribosomes. The protein is Peptidyl-tRNA hydrolase of Clostridium beijerinckii (strain ATCC 51743 / NCIMB 8052) (Clostridium acetobutylicum).